The following is a 595-amino-acid chain: NADH-quinone oxidoreductase subunit C/D (595 aa).

The interval 1-186 (MVTDNSKATD…TPYFLNNAKQ (186 aa)) is NADH dehydrogenase I subunit C. The segment at 210 to 595 (DFMFLNLGPN…IDIVMADTDR (386 aa)) is NADH dehydrogenase I subunit D.

In the N-terminal section; belongs to the complex I 30 kDa subunit family. It in the C-terminal section; belongs to the complex I 49 kDa subunit family. In terms of assembly, NDH-1 is composed of 13 different subunits. Subunits NuoB, CD, E, F, and G constitute the peripheral sector of the complex.

The protein localises to the cell inner membrane. It catalyses the reaction a quinone + NADH + 5 H(+)(in) = a quinol + NAD(+) + 4 H(+)(out). Functionally, NDH-1 shuttles electrons from NADH, via FMN and iron-sulfur (Fe-S) centers, to quinones in the respiratory chain. The immediate electron acceptor for the enzyme in this species is believed to be ubiquinone. Couples the redox reaction to proton translocation (for every two electrons transferred, four hydrogen ions are translocated across the cytoplasmic membrane), and thus conserves the redox energy in a proton gradient. This is NADH-quinone oxidoreductase subunit C/D from Psychrobacter sp. (strain PRwf-1).